The sequence spans 304 residues: Ribosomal RNA small subunit methyltransferase H (304 aa).

S-adenosyl-L-methionine is bound by residues 47-49, aspartate 66, phenylalanine 93, aspartate 108, and glutamine 115; that span reads GGH.

Belongs to the methyltransferase superfamily. RsmH family.

It localises to the cytoplasm. It catalyses the reaction cytidine(1402) in 16S rRNA + S-adenosyl-L-methionine = N(4)-methylcytidine(1402) in 16S rRNA + S-adenosyl-L-homocysteine + H(+). Functionally, specifically methylates the N4 position of cytidine in position 1402 (C1402) of 16S rRNA. This Prochlorococcus marinus (strain NATL2A) protein is Ribosomal RNA small subunit methyltransferase H.